Reading from the N-terminus, the 160-residue chain is Protein cornichon homolog 2 (160 aa).

The Cytoplasmic segment spans residues 1-10 (MAFTFAAFCY). Residues 11 to 31 (MLTLVLCAALIFFVIWQIIAF) form a helical membrane-spanning segment. At 32 to 72 (DELRTDFKNPIDQSNPTRARERILNIERICNLLRRLVVPEY) the chain is on the lumenal side. Residues 73–93 (SIHGLFCLMFMCAGEWVTLGL) form a helical membrane-spanning segment. The Cytoplasmic portion of the chain corresponds to 94–138 (NIPLLLYHLWRFFHRPADGSEVMYDPVSVMNADILNYCQKESWCK). Residues 139–159 (LGFYLLSFFYYLYSMVYALVS) traverse the membrane as a helical segment. Position 160 (Phe-160) is a topological domain, lumenal.

This sequence belongs to the cornichon family.

It is found in the membrane. Its function is as follows. Regulates the trafficking and gating properties of AMPA-selective glutamate receptors (AMPARs). The chain is Protein cornichon homolog 2 (cnih2) from Danio rerio (Zebrafish).